A 37-amino-acid polypeptide reads, in one-letter code: Antifungal protein S (37 aa).

It belongs to the thaumatin family.

In terms of biological role, has antifungal activity. Inhibits the growth of Trichoderma viridae and Candida albicans. This Hordeum vulgare (Barley) protein is Antifungal protein S.